The sequence spans 492 residues: High-affinity nickel transport protein (492 aa).

Over 1-24 the chain is Cytoplasmic; it reads MLSRWTRRVNESRLAQRKLTLLGR. The chain crosses the membrane as a helical span at residues 25–45; it reads AIALVVGELLFNAVCWIAAGI. Residues 46-50 lie on the Extracellular side of the membrane; sequence CFGKT. A helical transmembrane segment spans residues 51-71; it reads DGILGLALLAWTIGLRHGLDA. Residues 72–94 lie on the Cytoplasmic side of the membrane; it reads DHISAIDNATRQLVSQGQLPITC. The chain crosses the membrane as a helical span at residues 95–115; sequence GLFFSLGHSTIVIVVNVAIAV. Topologically, residues 116-136 are extracellular; that stretch reads SVDIYDKLDRVGSIGGIVGAA. A helical transmembrane segment spans residues 137–157; the sequence is VSASFLFLIACLNIYFLVGAI. Residues 158 to 210 lie on the Cytoplasmic side of the membrane; it reads KQRRSMKRRQALGLPPDEDEGDPSKIYGGGCMVRVVGPILRAVDRPWKMYPVG. The chain crosses the membrane as a helical span at residues 211-231; the sequence is VLFGFGFDTASSIALLAISAI. Residues 232-239 lie on the Extracellular side of the membrane; the sequence is AQRGPNGD. The helical transmembrane segment at 240-260 threads the bilayer; it reads AISHGKIVILPFLFTAGMSLV. Residues 261-382 lie on the Cytoplasmic side of the membrane; that stretch reads DSLDSILMLY…AKANTMSSLS (122 aa). The chain crosses the membrane as a helical span at residues 383–403; it reads IILTLLSILVALSISLIEIMG. Residues 404-439 are Extracellular-facing; sequence LIGDNCTQCQDAANDPDGGGLAGSWWRAWARANDQS. A glycan (N-linked (GlcNAc...) asparagine) is linked at N408. Residues 440–460 traverse the membrane as a helical segment; it reads GYIGAAIVGCFAAILAGWYGA. The Cytoplasmic portion of the chain corresponds to 461-492; it reads KWGKKKWKARRDANAAIVLEDNEDDAAETPVA.

Belongs to the NiCoT transporter (TC 2.A.52) family.

The protein localises to the cell membrane. Its function is as follows. High-affinity nickel-specific transporter responsible for nickel uptake and required for high levels of activity of urease URE1. Does not transport cobalt. Plays a role in host brain invasion. The sequence is that of High-affinity nickel transport protein from Cryptococcus neoformans var. grubii serotype A (strain H99 / ATCC 208821 / CBS 10515 / FGSC 9487) (Filobasidiella neoformans var. grubii).